A 217-amino-acid polypeptide reads, in one-letter code: Thiamine-phosphate synthase (217 aa).

Residues 45 to 49 (QFRQK) and asparagine 81 contribute to the 4-amino-2-methyl-5-(diphosphooxymethyl)pyrimidine site. The Mg(2+) site is built by aspartate 82 and aspartate 101. Serine 120 serves as a coordination point for 4-amino-2-methyl-5-(diphosphooxymethyl)pyrimidine. 2-[(2R,5Z)-2-carboxy-4-methylthiazol-5(2H)-ylidene]ethyl phosphate is bound at residue 147-149 (TPS). Position 150 (lysine 150) interacts with 4-amino-2-methyl-5-(diphosphooxymethyl)pyrimidine. Residues glycine 179 and 197 to 198 (IS) contribute to the 2-[(2R,5Z)-2-carboxy-4-methylthiazol-5(2H)-ylidene]ethyl phosphate site.

It belongs to the thiamine-phosphate synthase family. It depends on Mg(2+) as a cofactor.

The enzyme catalyses 2-[(2R,5Z)-2-carboxy-4-methylthiazol-5(2H)-ylidene]ethyl phosphate + 4-amino-2-methyl-5-(diphosphooxymethyl)pyrimidine + 2 H(+) = thiamine phosphate + CO2 + diphosphate. It carries out the reaction 2-(2-carboxy-4-methylthiazol-5-yl)ethyl phosphate + 4-amino-2-methyl-5-(diphosphooxymethyl)pyrimidine + 2 H(+) = thiamine phosphate + CO2 + diphosphate. It catalyses the reaction 4-methyl-5-(2-phosphooxyethyl)-thiazole + 4-amino-2-methyl-5-(diphosphooxymethyl)pyrimidine + H(+) = thiamine phosphate + diphosphate. It functions in the pathway cofactor biosynthesis; thiamine diphosphate biosynthesis; thiamine phosphate from 4-amino-2-methyl-5-diphosphomethylpyrimidine and 4-methyl-5-(2-phosphoethyl)-thiazole: step 1/1. Its function is as follows. Condenses 4-methyl-5-(beta-hydroxyethyl)thiazole monophosphate (THZ-P) and 2-methyl-4-amino-5-hydroxymethyl pyrimidine pyrophosphate (HMP-PP) to form thiamine monophosphate (TMP). The polypeptide is Thiamine-phosphate synthase (Helicobacter pylori (strain J99 / ATCC 700824) (Campylobacter pylori J99)).